Consider the following 193-residue polypeptide: Ion-translocating oxidoreductase complex subunit A (193 aa).

6 helical membrane-spanning segments follow: residues 5-25 (LLIL…FLGL), 38-58 (AMGM…CSYL), 65-85 (APLG…AVVV), 102-122 (VLGI…VALL), 134-154 (ILYG…FSAM), and 171-191 (AIGM…TGLV).

The protein belongs to the NqrDE/RnfAE family. The complex is composed of six subunits: RnfA, RnfB, RnfC, RnfD, RnfE and RnfG.

It is found in the cell inner membrane. Its function is as follows. Part of a membrane-bound complex that couples electron transfer with translocation of ions across the membrane. This chain is Ion-translocating oxidoreductase complex subunit A, found in Hahella chejuensis (strain KCTC 2396).